A 186-amino-acid chain; its full sequence is Ribosome-recycling factor (186 aa).

This sequence belongs to the RRF family.

The protein localises to the cytoplasm. Functionally, responsible for the release of ribosomes from messenger RNA at the termination of protein biosynthesis. May increase the efficiency of translation by recycling ribosomes from one round of translation to another. The protein is Ribosome-recycling factor of Burkholderia mallei (strain NCTC 10247).